The following is a 414-amino-acid chain: Particulate methane monooxygenase alpha subunit (414 aa).

The N-terminal stretch at 1–32 (MKTIKDRIAKWSAIGLLSAVAATAFYAPSASA) is a signal peptide. 5 residues coordinate Cu cation: histidine 33, histidine 48, histidine 72, histidine 137, and histidine 139. The cupredoxin domain used to construct soluble pmoB (spmoB) stretch occupies residues 33–172 (HGEKSQAAFM…MSEFRNPVTT (140 aa)). Helical transmembrane passes span 186-206 (GNTY…IGYW) and 235-255 (VAMG…SSAN). A cupredoxin domain used to construct soluble pmoB (spmoB) region spans residues 265–414 (QAGTMRGMKP…IDAPLIPSFM (150 aa)).

In terms of assembly, m.capsulatus has two forms of methane monooxygenase, a soluble (sMMO) and a membrane-bound (particulate) type (pMMO). The particulate type is a nonamer composed of three alpha:beta:gamma heterotrimeric protomers assembled into a cylindrical structure; the beta and gamma subunits comprise the bulk of the membrane-spanning regions and the soluble regions are derived primarily from alpha subunits which form two antiparallel beta-barrel-like structures each. This assembly, also called pMMO hydroxylase (pMMO-H), is proposed to associate with methanol dehydrogenase (MDH), also designated as pMMO-R, to form the pMMO-C complex which seems to have greater methane monooxygenase activity. Cu(2+) serves as cofactor.

It localises to the membrane. It carries out the reaction methane + a quinol + O2 = methanol + a quinone + H2O. In terms of biological role, methane monooxygenase is responsible for the initial oxygenation of methane to methanol in methanotrophs. At least in vitro, specific quinols can replace NADH as reductants. The protein is Particulate methane monooxygenase alpha subunit (pmoB1) of Methylococcus capsulatus (strain ATCC 33009 / NCIMB 11132 / Bath).